A 98-amino-acid chain; its full sequence is UPF0235 protein Pmen_4153 (98 aa).

The protein belongs to the UPF0235 family.

The protein is UPF0235 protein Pmen_4153 of Ectopseudomonas mendocina (strain ymp) (Pseudomonas mendocina).